A 363-amino-acid chain; its full sequence is Spore germination protein YndE (363 aa).

The next 10 membrane-spanning stretches (helical) occupy residues 8 to 28 (ITTA…GVLT), 41 to 61 (DGWI…MIIA), 84 to 104 (LGHL…AFEV), 113 to 133 (FFLL…WIGL), 149 to 169 (MIFP…LGIF), 189 to 209 (VKTT…VAFM), 218 to 238 (AVVI…IMVI), 273 to 293 (FLLV…FYAA), 305 to 325 (PLSC…MPKN), and 335 to 355 (TVSH…LVIS).

The protein belongs to the amino acid-polyamine-organocation (APC) superfamily. Spore germination protein (SGP) (TC 2.A.3.9) family.

Its subcellular location is the cell membrane. In terms of biological role, involved in the germinative response to L-alanine. Could be an amino acid transporter. The chain is Spore germination protein YndE (yndE) from Bacillus subtilis (strain 168).